Reading from the N-terminus, the 101-residue chain is Small ribosomal subunit protein uS14 (101 aa).

Over residues 1–10 (MAKKSSVEKN) the composition is skewed to basic and acidic residues. Positions 1–23 (MAKKSSVEKNNRRKRMAKNAAPK) are disordered. Basic residues predominate over residues 11 to 23 (NRRKRMAKNAAPK).

Belongs to the universal ribosomal protein uS14 family. As to quaternary structure, part of the 30S ribosomal subunit. Contacts proteins S3 and S10.

Its function is as follows. Binds 16S rRNA, required for the assembly of 30S particles and may also be responsible for determining the conformation of the 16S rRNA at the A site. This Bradyrhizobium sp. (strain BTAi1 / ATCC BAA-1182) protein is Small ribosomal subunit protein uS14.